The chain runs to 228 residues: Pyridoxamine 5'-phosphate oxidase (228 aa).

Residue 20 to 23 participates in pyridoxal 5'-phosphate binding; it reads QYDK. K29 is covalently cross-linked (Glycyl lysine isopeptide (Lys-Gly) (interchain with G-Cter in ubiquitin)). FMN is bound at residue 73-76; the sequence is RILL. K78 serves as a coordination point for pyridoxal 5'-phosphate. FMN-binding positions include 88-89, 95-96, and Q118; these read YS and RK. Residues Y136, R140, and S144 each contribute to the pyridoxal 5'-phosphate site. FMN is bound by residues 153-154 and W199; that span reads QS. Residue 205-207 coordinates pyridoxal 5'-phosphate; sequence RLH. R209 is a binding site for FMN.

The protein belongs to the pyridoxamine 5'-phosphate oxidase family. Homodimer. It depends on FMN as a cofactor.

It is found in the mitochondrion intermembrane space. It carries out the reaction pyridoxamine 5'-phosphate + O2 + H2O = pyridoxal 5'-phosphate + H2O2 + NH4(+). The catalysed reaction is pyridoxine 5'-phosphate + O2 = pyridoxal 5'-phosphate + H2O2. Its pathway is cofactor metabolism; pyridoxal 5'-phosphate salvage; pyridoxal 5'-phosphate from pyridoxamine 5'-phosphate: step 1/1. It participates in cofactor metabolism; pyridoxal 5'-phosphate salvage; pyridoxal 5'-phosphate from pyridoxine 5'-phosphate: step 1/1. Its function is as follows. Catalyzes the oxidation of either pyridoxine 5'-phosphate (PNP) or pyridoxamine 5'-phosphate (PMP) into pyridoxal 5'-phosphate (PLP). The sequence is that of Pyridoxamine 5'-phosphate oxidase (PDX3) from Saccharomyces cerevisiae (strain ATCC 204508 / S288c) (Baker's yeast).